A 591-amino-acid polypeptide reads, in one-letter code: Asparagine synthetase [glutamine-hydrolyzing] 2 (591 aa).

Cys2 serves as the catalytic For GATase activity. The Glutamine amidotransferase type-2 domain occupies 2-185 (CGILAVLGVA…PGHLYSSKTG (184 aa)). Residues 50–54 (RLAIV), 75–77 (NGE), and Asp98 contribute to the L-glutamine site. Residues 193–516 (PPWFSESIPS…PKNAARLTVP (324 aa)) enclose the Asparagine synthetase domain. ATP-binding positions include Leu231, Ile267, and 341–342 (SG).

Expressed in companion cells of leaf sheath vascular bundles, and phloem-parenchyma cells, nucellar projections and nucellar epidermis of dorsal vascular bundles of grains.

The enzyme catalyses L-aspartate + L-glutamine + ATP + H2O = L-asparagine + L-glutamate + AMP + diphosphate + H(+). The protein operates within amino-acid biosynthesis; L-asparagine biosynthesis; L-asparagine from L-aspartate (L-Gln route): step 1/1. Its function is as follows. Essential for nitrogen assimilation, distribution and remobilization within the plant via the phloem. This chain is Asparagine synthetase [glutamine-hydrolyzing] 2, found in Oryza sativa subsp. japonica (Rice).